Reading from the N-terminus, the 242-residue chain is N-glycosylase/DNA lyase (242 aa).

Positions 26, 53, and 64 each coordinate 8-oxoguanine. Residues 120–184 are helix-hairpin-helix; the sequence is EGYYKNMKML…EDLRIKSVTS (65 aa). Catalysis depends on Lys144, which acts as the Schiff-base intermediate with DNA. Residues Phe148 and Pro174 each contribute to the 8-oxoguanine site. The active site involves Asp176. Positions 210 and 214 each coordinate 8-oxoguanine.

This sequence belongs to the archaeal N-glycosylase/DNA lyase (AGOG) family.

The enzyme catalyses 2'-deoxyribonucleotide-(2'-deoxyribose 5'-phosphate)-2'-deoxyribonucleotide-DNA = a 3'-end 2'-deoxyribonucleotide-(2,3-dehydro-2,3-deoxyribose 5'-phosphate)-DNA + a 5'-end 5'-phospho-2'-deoxyribonucleoside-DNA + H(+). Its function is as follows. DNA repair enzyme that is part of the base excision repair (BER) pathway; protects from oxidative damage by removing the major product of DNA oxidation, 8-oxoguanine (GO), from single- and double-stranded DNA substrates. The sequence is that of N-glycosylase/DNA lyase from Pyrococcus furiosus (strain ATCC 43587 / DSM 3638 / JCM 8422 / Vc1).